The following is a 307-amino-acid chain: Dihydroorotate dehydrogenase A (fumarate) (307 aa).

FMN is bound by residues S21 and K46–T47. Substrate is bound by residues K46, N70–L74, and N130. N130 is a binding site for FMN. Residue C133 is the Nucleophile of the active site. Residues K168 and I194 each contribute to the FMN site. N195 to T196 is a substrate binding site. Residues G220, G246 to G247, and G268 to S269 each bind FMN.

It belongs to the dihydroorotate dehydrogenase family. Type 1 subfamily. As to quaternary structure, homodimer. The cofactor is FMN.

The protein localises to the cytoplasm. It carries out the reaction (S)-dihydroorotate + fumarate = orotate + succinate. Its pathway is pyrimidine metabolism; UMP biosynthesis via de novo pathway. Functionally, catalyzes the conversion of dihydroorotate to orotate with fumarate as the electron acceptor. The polypeptide is Dihydroorotate dehydrogenase A (fumarate) (pyrD) (Lactobacillus delbrueckii subsp. bulgaricus (strain ATCC 11842 / DSM 20081 / BCRC 10696 / JCM 1002 / NBRC 13953 / NCIMB 11778 / NCTC 12712 / WDCM 00102 / Lb 14)).